Reading from the N-terminus, the 1943-residue chain is Cadherin-86C (1943 aa).

A disordered region spans residues 1–102 (MASTSSSQPE…QNQQMQHHWP (102 aa)). The Extracellular segment spans residues 1 to 934 (MASTSSSQPE…TDTQYKAENK (934 aa)). A glycan (N-linked (GlcNAc...) asparagine) is linked at N12. Over residues 50-89 (PHHHHHHHHQHHHHHRLKQHHRHHHHHHRLQHHHHHHQQQ) the composition is skewed to basic residues. The span at 90-100 (HNHQNQQMQHH) shows a compositional bias: low complexity. Cadherin domains are found at residues 238-366 (CSIT…PPVF), 367-483 (TSAP…PPYF), 484-600 (ENDH…APVF), 601-708 (EQPA…TPIF), and 709-832 (DKDL…SVKF). 7 N-linked (GlcNAc...) asparagine glycosylation sites follow: N244, N419, N531, N579, N585, N612, and N645. N912 carries N-linked (GlcNAc...) asparagine glycosylation. The helical transmembrane segment at 935 to 955 (VLFWLLILLATLVALTILILL) threads the bilayer. At 956–1943 (LCCICSWCPL…NSGGESPQYS (988 aa)) the chain is on the cytoplasmic side. Disordered stretches follow at residues 1038–1058 (DVGR…SAEE), 1390–1442 (KPSR…RKRI), 1458–1516 (EEEE…SHNR), 1546–1695 (YKHS…ERNV), and 1707–1895 (KSSV…DDHD). The span at 1047-1058 (EGDRRHIQSAEE) shows a compositional bias: basic and acidic residues. The segment covering 1426-1442 (IKRRRTKKRPRQPRKRI) has biased composition (basic residues). Composition is skewed to basic and acidic residues over residues 1486–1497 (QLSDESRKDQSR) and 1507–1516 (HRSESDSHNR). Acidic residues predominate over residues 1552–1568 (DFDEDDTEYSIDSDGDE). Over residues 1580–1602 (QENERYRRQERTYAEPENPVDRK) the composition is skewed to basic and acidic residues. Over residues 1633–1667 (KQTSSEPPHNRVSISKYESTVTENGRKLMSTSTEI) the composition is skewed to polar residues. Over residues 1709–1724 (SVSGRTSTESSKSQPS) the composition is skewed to low complexity. 4 stretches are compositionally biased toward basic and acidic residues: residues 1754–1764 (TGGRYKPEPAP), 1774–1793 (LLKE…ETDT), 1800–1810 (HSEHRFERENA), and 1837–1863 (KESK…ENEV). Residues 1879 to 1889 (HPTQKQLNAST) show a composition bias toward polar residues.

In terms of tissue distribution, as cell intercalation proceeds, a row of stigmatophore cells surrounding the spiracular chamber show expression of Cad86C. Expression is regulated by the Abd-B cascade, requiring sal. Expressed in a broad region of the morphogenetic furrow and in clusters of cells posterior to the morphogenetic furrow. Weakly expressed in the epithelium of wing imaginal disks. In eye imaginal disk cells within the morphogenetic furrow, expression is localized to the apical region.

The protein resides in the cell membrane. Its function is as follows. Cadherins are calcium-dependent cell adhesion proteins. They preferentially interact with themselves in a homophilic manner in connecting cells. This Drosophila melanogaster (Fruit fly) protein is Cadherin-86C (Cad86C).